The chain runs to 39 residues: Photosystem II reaction center protein L (39 aa).

A helical membrane pass occupies residues 18 to 38; sequence SLYLGVLSVLVLGILFSSYFF.

It belongs to the PsbL family. In terms of assembly, PSII is composed of 1 copy each of membrane proteins PsbA, PsbB, PsbC, PsbD, PsbE, PsbF, PsbH, PsbI, PsbJ, PsbK, PsbL, PsbM, PsbT, PsbX, PsbY, Psb30/Ycf12, peripheral proteins PsbO, CyanoQ (PsbQ), PsbU, PsbV and a large number of cofactors. It forms dimeric complexes.

The protein localises to the cellular thylakoid membrane. One of the components of the core complex of photosystem II (PSII). PSII is a light-driven water:plastoquinone oxidoreductase that uses light energy to abstract electrons from H(2)O, generating O(2) and a proton gradient subsequently used for ATP formation. It consists of a core antenna complex that captures photons, and an electron transfer chain that converts photonic excitation into a charge separation. This subunit is found at the monomer-monomer interface and is required for correct PSII assembly and/or dimerization. In Prochlorococcus marinus (strain MIT 9515), this protein is Photosystem II reaction center protein L.